A 165-amino-acid chain; its full sequence is Lipoprotein signal peptidase (165 aa).

A run of 4 helical transmembrane segments spans residues 11 to 31 (YWVLALAAIVLDQWSKWAVLS), 41 to 61 (VIPSFFDLTLVYNPGAAFSFL), 64 to 84 (QGGWQKYFFLVLAVAVSAYLV), and 92 to 112 (FATLGKTGAAMIIGGALGNVI). Residues Asp122 and Asp140 contribute to the active site. Residues 132 to 152 (FYPAFNIADSFICVGAVLAVL) form a helical membrane-spanning segment.

Belongs to the peptidase A8 family.

It is found in the cell inner membrane. It catalyses the reaction Release of signal peptides from bacterial membrane prolipoproteins. Hydrolyzes -Xaa-Yaa-Zaa-|-(S,diacylglyceryl)Cys-, in which Xaa is hydrophobic (preferably Leu), and Yaa (Ala or Ser) and Zaa (Gly or Ala) have small, neutral side chains.. It participates in protein modification; lipoprotein biosynthesis (signal peptide cleavage). In terms of biological role, this protein specifically catalyzes the removal of signal peptides from prolipoproteins. The protein is Lipoprotein signal peptidase of Neisseria meningitidis serogroup A / serotype 4A (strain DSM 15465 / Z2491).